A 473-amino-acid chain; its full sequence is Lactate utilization protein B (473 aa).

4Fe-4S ferredoxin-type domains follow at residues 302–332 (GSEF…GHSY) and 351–380 (YNDY…LHDL). Residues Cys311, Cys314, Cys317, Cys321, Cys364, Cys367, and Cys371 each coordinate [4Fe-4S] cluster.

This sequence belongs to the LutB/YkgF family.

Its function is as follows. Is involved in L-lactate degradation and allows cells to grow with lactate as the sole carbon source. Has probably a role as an electron transporter during oxidation of L-lactate. This is Lactate utilization protein B from Bacillus cereus (strain AH820).